The following is a 364-amino-acid chain: UDP-N-acetylglucosamine--N-acetylmuramyl-(pentapeptide) pyrophosphoryl-undecaprenol N-acetylglucosamine transferase (364 aa).

Residues 10–12 (TGG), Asn126, Arg167, Ser199, Ile253, and Gln298 each bind UDP-N-acetyl-alpha-D-glucosamine.

Belongs to the glycosyltransferase 28 family. MurG subfamily.

It is found in the cell inner membrane. The catalysed reaction is di-trans,octa-cis-undecaprenyl diphospho-N-acetyl-alpha-D-muramoyl-L-alanyl-D-glutamyl-meso-2,6-diaminopimeloyl-D-alanyl-D-alanine + UDP-N-acetyl-alpha-D-glucosamine = di-trans,octa-cis-undecaprenyl diphospho-[N-acetyl-alpha-D-glucosaminyl-(1-&gt;4)]-N-acetyl-alpha-D-muramoyl-L-alanyl-D-glutamyl-meso-2,6-diaminopimeloyl-D-alanyl-D-alanine + UDP + H(+). It participates in cell wall biogenesis; peptidoglycan biosynthesis. Its function is as follows. Cell wall formation. Catalyzes the transfer of a GlcNAc subunit on undecaprenyl-pyrophosphoryl-MurNAc-pentapeptide (lipid intermediate I) to form undecaprenyl-pyrophosphoryl-MurNAc-(pentapeptide)GlcNAc (lipid intermediate II). In Amoebophilus asiaticus (strain 5a2), this protein is UDP-N-acetylglucosamine--N-acetylmuramyl-(pentapeptide) pyrophosphoryl-undecaprenol N-acetylglucosamine transferase.